The following is a 121-amino-acid chain: C-type natriuretic peptide 4 (121 aa).

The N-terminal stretch at 1 to 22 (MNLSYLVACGLLVTFLSDKMDA) is a signal peptide. The propeptide occupies 23–96 (QPLTPAQQKS…SRRHKSGSKK (74 aa)). The segment at 80-109 (LLNDQPASRRHKSGSKKGGSTSRSGCFGHK) is disordered. Cys-105 and Cys-121 are oxidised to a cystine.

Belongs to the natriuretic peptide family. Brain, spinal cord, spleen, heart and fin, and to a lower extent in gill and ovary.

It localises to the secreted. In terms of biological role, exhibits natriuretic and vasodepressant activity. Has cGMP-stimulating activity. May help to regulate body fluid homeostasis in a variety of aquatic environments. The polypeptide is C-type natriuretic peptide 4 (Oryzias latipes (Japanese rice fish)).